The primary structure comprises 327 residues: Glycolipid sulfotransferase BCG_1434 (327 aa).

40–45 lines the 3'-phosphoadenylyl sulfate pocket; sequence KSGLTW. Histidine 97 functions as the Proton acceptor in the catalytic mechanism. 116-124 serves as a coordination point for 3'-phosphoadenylyl sulfate; that stretch reads RDPRDAAVS.

The protein belongs to the sulfotransferase 1 family.

Functionally, involved in the synthesis of cell wall sulfolipids. In Mycobacterium bovis (strain BCG / Pasteur 1173P2), this protein is Glycolipid sulfotransferase BCG_1434.